We begin with the raw amino-acid sequence, 383 residues long: uncharacterized protein (383 aa).

A helical membrane pass occupies residues 6 to 26; it reads LFLFSCLYFIGGNLKALVLGI. An ATP-grasp domain is found at 131 to 303; sequence YKKLKNLGFN…LAMVLLNNKY (173 aa).

It localises to the membrane. This is an uncharacterized protein from Methanocaldococcus jannaschii (strain ATCC 43067 / DSM 2661 / JAL-1 / JCM 10045 / NBRC 100440) (Methanococcus jannaschii).